Consider the following 430-residue polypeptide: WD repeat-containing protein jip5 (430 aa).

WD repeat units lie at residues 9 to 48, 72 to 111, 117 to 158, 215 to 262, 272 to 318, and 323 to 360; these read PLSS…AAAE, RHKG…VTSK, TNTD…SFKS, DQEE…DQSE, AGGE…GVVE, and DDIE…EEEE. A compositionally biased stretch (acidic residues) spans 356–374; that stretch reads EEEEEEEEEEQEDIEDNDD. The tract at residues 356–430 is disordered; it reads EEEEEEEEEE…NGILKFKGME (75 aa). Basic and acidic residues predominate over residues 382 to 397; it reads HALERDSDDSDARADS. Residues 405-416 are compositionally biased toward basic residues; it reads RKKRKKKKKGKK.

This sequence belongs to the WD repeat WDR55 family.

It is found in the nucleus. Its subcellular location is the nucleolus. This Botryotinia fuckeliana (strain B05.10) (Noble rot fungus) protein is WD repeat-containing protein jip5 (jip5).